The following is a 2742-amino-acid chain: Polycystin-1-like protein 1 (2742 aa).

The Extracellular portion of the chain corresponds to 1-1602 (MFCLWIFSLA…LDQFLSVSRD (1602 aa)). N-linked (GlcNAc...) asparagine glycans are attached at residues asparagine 35, asparagine 133, asparagine 149, asparagine 220, and asparagine 267. PKD domains lie at 286–372 (AVRI…VKLN) and 370–454 (KLNR…PCQP). Asparagine 383, asparagine 397, asparagine 486, asparagine 545, asparagine 693, asparagine 709, and asparagine 735 each carry an N-linked (GlcNAc...) asparagine glycan. Positions 452 to 1338 (CQPPPVKNLG…ITFFLPASLI (887 aa)) constitute an REJ domain. Disordered regions lie at residues 767–829 (SPSR…QSDP) and 846–908 (DLRG…RPSV). The segment covering 779–799 (SELTDSPVSSVTVGFSGSESF) has biased composition (polar residues). Residues 880 to 893 (SFPSDSDSFSHSSS) are compositionally biased toward low complexity. N-linked (GlcNAc...) asparagine glycans are attached at residues asparagine 1080, asparagine 1101, asparagine 1201, asparagine 1318, asparagine 1437, asparagine 1490, and asparagine 1568. The GAIN-B domain maps to 1436 to 1587 (HNFSITQEHL…KVLQQQIQSS (152 aa)). 2 disulfide bridges follow: cysteine 1541–cysteine 1569 and cysteine 1556–cysteine 1571. The interval 1541–1587 (CLSWEDQQGSWTQNGCRAQTNDKTSAVNCSCHHLKPLKVLQQQIQSS) is GPS. The chain crosses the membrane as a helical span at residues 1603-1623 (LTVVFVLLLCVSLNIPVLVWC). The Cytoplasmic segment spans residues 1624–1812 (KKTDATSEEN…SPHLFTRAQR (189 aa)). Residues 1648–1769 (HFYAVTVHTG…GDGQVERMLR (122 aa)) form the PLAT domain. A helical transmembrane segment spans residues 1813–1833 (LCVCLLLFLGYACVNIIITHQ). Residues 1834-1851 (RDDQLPFDLGVIDVTSVS) are Extracellular-facing. The chain crosses the membrane as a helical span at residues 1852 to 1872 (IATGLVSVVAVLPVAMVISFL). The Cytoplasmic segment spans residues 1873–2005 (FRVKSGRMTL…YRLASLLYHC (133 aa)). Residues 2006-2026 (VAWTLCLLFCLSCLILSAVLG) form a helical membrane-spanning segment. At 2027–2040 (TRLNSGKILHWIHS) the chain is on the extracellular side. The chain crosses the membrane as a helical span at residues 2041-2061 (LFVSLTFCFFVIHPATILVLA). The Cytoplasmic segment spans residues 2062–2151 (AVVSWRFKRS…KQAVIHKMLR (90 aa)). A helical transmembrane segment spans residues 2152–2172 (DLCLCGSMFFLMVCITYGSPV). Residues 2173–2344 (DEHYPLNAAF…QSVRLYHSPS (172 aa)) are Extracellular-facing. Asparagine 2218 is a glycosylation site (N-linked (GlcNAc...) asparagine). The chain crosses the membrane as a helical span at residues 2345 to 2365 (MLDYTVMVWQLLFLLLSLVNL). Over 2366-2378 (YHQTSTAAQHGLM) the chain is Cytoplasmic. Residues 2379–2401 (GYWKTTSISVEVSLVIVSLVYYV) traverse the membrane as a helical segment. Topologically, residues 2402-2442 (HYVYHPTMVMEVAEQLRRNHREHVDVSTLANSEQFSRTLRG) are extracellular. The helical transmembrane segment at 2443–2463 (IILFLLAVKCVTVVRLNRILA) threads the bilayer. Topologically, residues 2464-2467 (PSMP) are cytoplasmic. A helical membrane pass occupies residues 2468–2488 (LLSLSSLLWPAISGLLLLSIF). Over 2489 to 2528 (SCMGRLLYIERTFHSIQTVLWHFWSLRKSRDLISLWRDFY) the chain is Extracellular. The chain crosses the membrane as a helical span at residues 2529–2549 (YFGLLYASSAMLTTMVFAVMI). Residues 2550 to 2742 (RKAKRSPSTK…LVHHEQGTKN (193 aa)) are Cytoplasmic-facing.

This sequence belongs to the polycystin family. In terms of assembly, heterodimer. Interacts with pkd2 to form a calcium channel. Interacts with pkd2l1 to form ciliary calcium channel. As to expression, expressed in Kupffer's vesicle, an organ equivalent to the node.

Its subcellular location is the cell projection. It localises to the cilium membrane. In terms of biological role, component of a calcium-permeant ion channel formed by PKD1L2 and PKD1L1 in primary cilia, where it controls cilium calcium concentration, without affecting cytoplasmic calcium concentration, and regulates sonic hedgehog/SHH signaling and GLI2 transcription. The PKD1L1:PKD2L1 channel complex is mechanosensitive only at high pressures and is highly temperature sensitive. Also involved in left/right axis specification downstream of nodal flow by forming a complex with PKD2 in cilia to facilitate flow detection in left/right patterning. This is Polycystin-1-like protein 1 from Oryzias latipes (Japanese rice fish).